The following is a 334-amino-acid chain: Fructose-1,6-bisphosphatase class 1 (334 aa).

Residues Glu-89, Asp-112, Leu-114, and Asp-115 each coordinate Mg(2+). Substrate contacts are provided by residues 115–118 (DGSS), Asn-208, Tyr-241, and Lys-271. Position 277 (Glu-277) interacts with Mg(2+).

The protein belongs to the FBPase class 1 family. As to quaternary structure, homotetramer. The cofactor is Mg(2+).

The protein resides in the cytoplasm. It carries out the reaction beta-D-fructose 1,6-bisphosphate + H2O = beta-D-fructose 6-phosphate + phosphate. It functions in the pathway carbohydrate biosynthesis; gluconeogenesis. The sequence is that of Fructose-1,6-bisphosphatase class 1 from Serratia proteamaculans (strain 568).